A 443-amino-acid polypeptide reads, in one-letter code: Glucose-6-phosphate isomerase (443 aa).

The Proton donor role is filled by Glu285. Catalysis depends on residues His306 and Lys420.

This sequence belongs to the GPI family.

The protein localises to the cytoplasm. The catalysed reaction is alpha-D-glucose 6-phosphate = beta-D-fructose 6-phosphate. Its pathway is carbohydrate biosynthesis; gluconeogenesis. It functions in the pathway carbohydrate degradation; glycolysis; D-glyceraldehyde 3-phosphate and glycerone phosphate from D-glucose: step 2/4. Functionally, catalyzes the reversible isomerization of glucose-6-phosphate to fructose-6-phosphate. The protein is Glucose-6-phosphate isomerase of Staphylococcus aureus (strain bovine RF122 / ET3-1).